Consider the following 363-residue polypeptide: Mitogen-activated protein kinase 12 (363 aa).

A Protein kinase domain is found at 25–309 (YKDLKQVGTG…AAEALAFPFF (285 aa)). ATP-binding positions include 31-39 (VGTGAYGTV) and Lys-54. Asp-151 acts as the Proton acceptor in catalysis. A Phosphothreonine modification is found at Thr-181. Residues 181–183 (TGY) carry the TXY motif. Position 183 is a phosphotyrosine (Tyr-183).

It belongs to the protein kinase superfamily. CMGC Ser/Thr protein kinase family. MAP kinase subfamily. Mg(2+) is required as a cofactor. Post-translationally, dually phosphorylated on Thr-181 and Tyr-183, which activates the enzyme.

Its subcellular location is the cytoplasm. The enzyme catalyses L-seryl-[protein] + ATP = O-phospho-L-seryl-[protein] + ADP + H(+). The catalysed reaction is L-threonyl-[protein] + ATP = O-phospho-L-threonyl-[protein] + ADP + H(+). Its activity is regulated as follows. Activated by threonine and tyrosine phosphorylation. Functionally, serine/threonine kinase which acts as an essential component of the MAP kinase signal transduction pathway. MAPK12 is one of the four p38 MAPKs which play an important role in the cascades of cellular responses evoked by extracellular stimuli such as pro-inflammatory cytokines or physical stress leading to direct activation of transcription factors. Accordingly, p38 MAPKs phosphorylate a broad range of proteins and it has been estimated that they may have approximately 200 to 300 substrates each. Some of the targets are downstream kinases such as MAPKAPK2, which are activated through phosphorylation and further phosphorylate additional targets. The sequence is that of Mitogen-activated protein kinase 12 (mapk12) from Danio rerio (Zebrafish).